A 268-amino-acid polypeptide reads, in one-letter code: Phosphatidylglycerol--prolipoprotein diacylglyceryl transferase (268 aa).

A run of 3 helical transmembrane segments spans residues Phe16–Leu36, Ile56–Gly76, and Gly92–Val112. Position 136 (Arg136) interacts with a 1,2-diacyl-sn-glycero-3-phospho-(1'-sn-glycerol). 3 consecutive transmembrane segments (helical) span residues Pro175–Phe195, Gly204–Leu224, and Ile236–Tyr256.

It belongs to the Lgt family.

Its subcellular location is the cell inner membrane. It carries out the reaction L-cysteinyl-[prolipoprotein] + a 1,2-diacyl-sn-glycero-3-phospho-(1'-sn-glycerol) = an S-1,2-diacyl-sn-glyceryl-L-cysteinyl-[prolipoprotein] + sn-glycerol 1-phosphate + H(+). The protein operates within protein modification; lipoprotein biosynthesis (diacylglyceryl transfer). Functionally, catalyzes the transfer of the diacylglyceryl group from phosphatidylglycerol to the sulfhydryl group of the N-terminal cysteine of a prolipoprotein, the first step in the formation of mature lipoproteins. The chain is Phosphatidylglycerol--prolipoprotein diacylglyceryl transferase from Thermosynechococcus vestitus (strain NIES-2133 / IAM M-273 / BP-1).